The chain runs to 423 residues: Serine--tRNA ligase (423 aa).

230–232 (TAE) contacts L-serine. 261 to 263 (RQE) contacts ATP. Glu284 is a binding site for L-serine. 348–351 (EISS) contributes to the ATP binding site. Ser384 provides a ligand contact to L-serine.

The protein belongs to the class-II aminoacyl-tRNA synthetase family. Type-1 seryl-tRNA synthetase subfamily. As to quaternary structure, homodimer. The tRNA molecule binds across the dimer.

It localises to the cytoplasm. It catalyses the reaction tRNA(Ser) + L-serine + ATP = L-seryl-tRNA(Ser) + AMP + diphosphate + H(+). The enzyme catalyses tRNA(Sec) + L-serine + ATP = L-seryl-tRNA(Sec) + AMP + diphosphate + H(+). The protein operates within aminoacyl-tRNA biosynthesis; selenocysteinyl-tRNA(Sec) biosynthesis; L-seryl-tRNA(Sec) from L-serine and tRNA(Sec): step 1/1. Catalyzes the attachment of serine to tRNA(Ser). Is also able to aminoacylate tRNA(Sec) with serine, to form the misacylated tRNA L-seryl-tRNA(Sec), which will be further converted into selenocysteinyl-tRNA(Sec). This Thermoanaerobacter pseudethanolicus (strain ATCC 33223 / 39E) (Clostridium thermohydrosulfuricum) protein is Serine--tRNA ligase.